The primary structure comprises 291 residues: 4-hydroxy-tetrahydrodipicolinate synthase (291 aa).

A pyruvate-binding site is contributed by T44. Y132 (proton donor/acceptor) is an active-site residue. The Schiff-base intermediate with substrate role is filled by K160. Residue V202 participates in pyruvate binding.

This sequence belongs to the DapA family. In terms of assembly, homotetramer; dimer of dimers.

It localises to the cytoplasm. The enzyme catalyses L-aspartate 4-semialdehyde + pyruvate = (2S,4S)-4-hydroxy-2,3,4,5-tetrahydrodipicolinate + H2O + H(+). Its pathway is amino-acid biosynthesis; L-lysine biosynthesis via DAP pathway; (S)-tetrahydrodipicolinate from L-aspartate: step 3/4. In terms of biological role, catalyzes the condensation of (S)-aspartate-beta-semialdehyde [(S)-ASA] and pyruvate to 4-hydroxy-tetrahydrodipicolinate (HTPA). The protein is 4-hydroxy-tetrahydrodipicolinate synthase of Clostridium perfringens (strain 13 / Type A).